Consider the following 414-residue polypeptide: Methyl-CpG-binding domain protein 2 (414 aa).

Residues 1-152 (MRAHPGGGRC…GPRATESGKR (152 aa)) are required for interaction with DHX9 and PRMT5. A disordered region spans residues 1–163 (MRAHPGGGRC…DCPALPPGWK (163 aa)). Positions 77–95 (GRGRGRGRGRGRGRGRGRG) are enriched in basic residues. Positions 98–123 (QSGGSGLGGDGGGGAGGCGGGSGGGV) are enriched in gly residues. In terms of domain architecture, MBD spans 148–216 (ESGKRMDCPA…SSFDFRTGKM (69 aa)). A Phosphoserine modification is found at Ser-184. Residues 217–244 (MPSKLQKNKQRLRNDPLNQNKGKPDLNT) form a disordered region. A compositionally biased stretch (polar residues) spans 232 to 244 (PLNQNKGKPDLNT). Residue Ser-410 is modified to Phosphoserine.

In terms of assembly, heterodimer with MBD3 (via N-terminus). Component of the MeCP1 complex that contains HDAC1 and HDAC2. Component of the nucleosome remodeling and deacetylase (NuRD) repressor complex, composed of core proteins MTA1, MTA2, MTA3, RBBP4, RBBP7, HDAC1, HDAC2, MBD2, MBD3, and peripherally associated proteins CDK2AP1, CDK2AP2, GATAD2A, GATAD2B, CHD3, CHD4 and CHD5. The exact stoichiometry of the NuRD complex is unknown, and some subunits such as MBD2 and MBD3, GATAD2A and GATAD2B, and CHD3, CHD4 and CHD5 define mutually exclusive NuRD complexes. Interacts with CDK2AP1. Interacts with DHX9. Interacts with DNMT1. Interacts with GATAD2A/p66-alpha. Interacts with GATAD2B/p66-beta. Interacts with GPN1. Interacts with MIZF. Interacts with PRMT5. Interacts with SIN3A. Interacts with SPHK2. In terms of tissue distribution, highly expressed in brain, heart, kidney, lung, skeletal muscle, spleen and testis. Detected at lower levels in embryonic stem cells.

The protein resides in the nucleus. The protein localises to the chromosome. Functionally, binds CpG islands in promoters where the DNA is methylated at position 5 of cytosine within CpG dinucleotides. Binds hemimethylated DNA as well. Recruits histone deacetylases and DNA methyltransferases to chromatin. Acts as a component of the histone deacetylase NuRD complex which participates in the remodeling of chromatin. Acts as transcriptional repressor and plays a role in gene silencing. Functions as a scaffold protein, targeting GATAD2A and GATAD2B to chromatin to promote repression. May enhance the activation of some unmethylated cAMP-responsive promoters. Selectively represses transcription activity of methylated rRNA promoters. In Mus musculus (Mouse), this protein is Methyl-CpG-binding domain protein 2.